The chain runs to 209 residues: MSNDSSKAKQNQVDEAVEGEILTESEVETGNDEASLMDELTQANFRVEELEQALAEANAKIEEQKDSVTRAAASEANIRRRAAQDVEKAHKFALEKFANELLPVIDNMERALQGTNAEAEETKAIYEGVELTLKSFVSTVDKFGLKEVNPHGESFNPEHHQAIGMQPSPEFPANTVMMVMQKGYILNDRLLRPAMVMVSQGGSGVDTQA.

Residues 1 to 13 (MSNDSSKAKQNQV) are compositionally biased toward polar residues. Residues 1 to 33 (MSNDSSKAKQNQVDEAVEGEILTESEVETGNDE) form a disordered region. Over residues 15-31 (EAVEGEILTESEVETGN) the composition is skewed to acidic residues.

The protein belongs to the GrpE family. As to quaternary structure, homodimer.

The protein resides in the cytoplasm. Its function is as follows. Participates actively in the response to hyperosmotic and heat shock by preventing the aggregation of stress-denatured proteins, in association with DnaK and GrpE. It is the nucleotide exchange factor for DnaK and may function as a thermosensor. Unfolded proteins bind initially to DnaJ; upon interaction with the DnaJ-bound protein, DnaK hydrolyzes its bound ATP, resulting in the formation of a stable complex. GrpE releases ADP from DnaK; ATP binding to DnaK triggers the release of the substrate protein, thus completing the reaction cycle. Several rounds of ATP-dependent interactions between DnaJ, DnaK and GrpE are required for fully efficient folding. This Shewanella woodyi (strain ATCC 51908 / MS32) protein is Protein GrpE.